The chain runs to 1102 residues: Endocytosis protein end4 (1102 aa).

The ENTH domain occupies aspartate 9–asparagine 139. Residues proline 265 to tryptophan 334 are disordered. The span at threonine 292–serine 305 shows a compositional bias: polar residues. The stretch at threonine 338–glutamine 661 forms a coiled coil. One can recognise an I/LWEQ domain in the interval leucine 858–alanine 1100.

This sequence belongs to the SLA2 family.

The protein localises to the cytoplasm. It is found in the cytoskeleton. Its function is as follows. Required for cellular morphogenesis and polarization of the cortical cytoskeleton. Required for establishment of new polarized growth zones where it acts in actin organization. Involved plasma membrane internalization and is essential for fluid-phase endocytosis. This Schizosaccharomyces pombe (strain 972 / ATCC 24843) (Fission yeast) protein is Endocytosis protein end4 (end4).